The chain runs to 124 residues: Alpha-amylase inhibitor 0.19 (124 aa).

Disulfide bonds link Cys-6–Cys-52, Cys-20–Cys-41, Cys-28–Cys-83, Cys-42–Cys-99, and Cys-54–Cys-115.

Belongs to the protease inhibitor I6 (cereal trypsin/alpha-amylase inhibitor) family. As to quaternary structure, homodimer. The disulfide bonds are essential for the inhibitor activity. Endosperm.

The protein localises to the secreted. Its function is as follows. Alpha-amylase inhibitor. The sequence is that of Alpha-amylase inhibitor 0.19 from Triticum aestivum (Wheat).